Reading from the N-terminus, the 481-residue chain is Keratin, type II cuticular Hb1 (481 aa).

Residues 1–106 form a head region; sequence MTCGSGFCGR…PNAQCVKHEE (106 aa). Residues 106 to 417 enclose the IF rod domain; sequence EKEQIKCLNS…RLLEGEEQRL (312 aa). Residues 107–141 are coil 1A; it reads KEQIKCLNSKFAAFIDKVRFLEQQNKLLETKWQFY. A linker 1 region spans residues 142-151; sequence QNRKCCESNM. A coil 1B region spans residues 152 to 252; the sequence is EPLFEGYIEA…YDEETRILHS (101 aa). Residue lysine 212 forms a Glycyl lysine isopeptide (Lys-Gly) (interchain with G-Cter in SUMO1) linkage. The tract at residues 253 to 269 is linker 12; the sequence is HISDTSIVVKMDNSRDL. The tract at residues 270 to 413 is coil 2; it reads NMDCVVAEIK…TTYRRLLEGE (144 aa). Positions 414-481 are tail; sequence EQRLCEGVGA…GSAVSCGRKC (68 aa).

The protein belongs to the intermediate filament family. In terms of assembly, heterotetramer of two type I and two type II keratins. In terms of tissue distribution, expressed in dorsal skin.

The protein is Keratin, type II cuticular Hb1 of Mus musculus (Mouse).